The following is a 487-amino-acid chain: Zinc finger and BTB domain-containing protein 32 (487 aa).

One can recognise a BTB domain in the interval 29–87; that stretch reads CDTLITVGGQEFPAHSLVLAGVSQQLGRRGQWALGEGISPSTFAQLLNFVYGESVELQP. Over residues 113–166 the composition is skewed to basic and acidic residues; sequence RGDRAKKPDPGLKKHQEEPEKPSRNAERELGDPGEKQKPEQVSRTGGREQEMLH. 2 disordered regions span residues 113-208 and 308-371; these read RGDR…ADGK and QNQL…ARSR. Over residues 308-320 the composition is skewed to polar residues; that stretch reads QNQLASSSPTPGS. A compositionally biased stretch (pro residues) spans 357 to 369; the sequence is PPRPHPPPAPPAR. 3 C2H2-type zinc fingers span residues 373–395, 401–423, and 428–450; these read YACSVCGKRFSLKHQMETHYRVH, FSCSLCPQRSRDFSAMTKHLRTH, and YRXXLCGAGCPSLASMQAHMRGH. Residues 468–487 are disordered; the sequence is SSSRPSRPSTSPCCPSSSTT.

The protein belongs to the krueppel C2H2-type zinc-finger protein family. As to quaternary structure, homodimer (via PTB domain). Interacts with the N-terminal of FANCC. Interacts with ZBTB16. Interacts with GATA3.

The protein localises to the nucleus. Its function is as follows. DNA-binding protein that binds to the to a 5'-TGTACAGTGT-3' core sequence. May function as a transcriptional transactivator and transcriptional repressor. Probably exerts its repressor effect by preventing GATA3 from binding to DNA. May play a role in regulating the differentiation and activation of helper T-cells. In Pan troglodytes (Chimpanzee), this protein is Zinc finger and BTB domain-containing protein 32 (ZBTB32).